A 450-amino-acid chain; its full sequence is MRLSLVGVAIGLLSSSAIVTAQTYTDCNPLQKTCPPDPALGRSVTYDFTKGSSPDFKPVGSPTYDSNNGAAFSVAKQGDAPLIQSNWYMMFGHVEFVIKTAPGKGIVSSAVLQSDDLDEIDWEWLGANNLYVQTNYFGKGDTGSYNRGAAHDNAGNQDGFHTYTIDWTSTQIVWQIDGKTVRVLTAESAGDHFPQSPMMVKVGVWAGGDPNNAPGTIQWAGGETDYSAGPYTMYLKSLVATDYSTGKSYTYSDKSGSWRSITSDGGQINGNSDAESISTVESAPPVTATIDSAPIPFSGTHRETSSFVTPSIWPWVPKPTTLSSSVAKDTTLPSGWTFSGSRQVQPPSAASSTPPCTSSSLVSSLASPSHSGLKTSSISSVPNSSSATKSTGHLASTATYQISTYDSTLPSFSASIAHVAPTVAAANDLLEAPLGMGVFCALLGGLIAIF.

An N-terminal signal peptide occupies residues 1 to 21; the sequence is MRLSLVGVAIGLLSSSAIVTA. A disulfide bond links cysteine 27 and cysteine 34. The GH16 domain maps to 46-228; it reads YDFTKGSSPD…WAGGETDYSA (183 aa). Glutamate 119 functions as the Nucleophile in the catalytic mechanism. Catalysis depends on glutamate 123, which acts as the Proton donor. Residues glutamate 123, lysine 201, tryptophan 205, and threonine 216 each coordinate chitin. The N-linked (GlcNAc...) asparagine glycan is linked to asparagine 383.

Belongs to the glycosyl hydrolase 16 family. CRH1 subfamily. In terms of processing, the GPI-like anchor contains a phosphoceramide lipid group. The anchor position has not been determined.

Its subcellular location is the cell membrane. It is found in the secreted. It localises to the cell wall. The catalysed reaction is Random endo-hydrolysis of N-acetyl-beta-D-glucosaminide (1-&gt;4)-beta-linkages in chitin and chitodextrins.. Its function is as follows. Dual chitinase/transglycosylase that plays a role in cell wall architecture. Chitinase and transglycosylase activities are coupled. Required for the polysaccharide cross-linking at the septa and the cell wall. More specifically, transfers chitin to 1,6-beta-glucan in the cell wall. In Aspergillus fumigatus (strain ATCC MYA-4609 / CBS 101355 / FGSC A1100 / Af293) (Neosartorya fumigata), this protein is Crh-like protein 4.